Consider the following 185-residue polypeptide: Thiol:disulfide interchange protein DsbE (185 aa).

At 1–4 (MKRN) the chain is on the cytoplasmic side. A helical membrane pass occupies residues 5–25 (VLLLPLLIFLLIAAALLWQLA). At 26–185 (RNAQGDDPTN…WDRYSREAAQ (160 aa)) the chain is on the periplasmic side. The Thioredoxin domain maps to 39 to 177 (ALTGKPVPAF…WESELKPLWD (139 aa)). A disulfide bond links Cys-80 and Cys-83.

It belongs to the thioredoxin family. DsbE subfamily.

The protein resides in the cell inner membrane. Its function is as follows. Involved in disulfide bond formation. Catalyzes a late, reductive step in the assembly of periplasmic c-type cytochromes, probably the reduction of disulfide bonds of the apocytochrome c to allow covalent linkage with the heme. Possible subunit of a heme lyase. This Salmonella typhimurium (strain LT2 / SGSC1412 / ATCC 700720) protein is Thiol:disulfide interchange protein DsbE (dsbE1).